A 384-amino-acid polypeptide reads, in one-letter code: G protein-coupled receptor 88 (384 aa).

The Extracellular portion of the chain corresponds to 1–35; sequence MTNSSSTSTSSTTGGSLLLLCEEEESWAGRRIPVS. An N-linked (GlcNAc...) asparagine glycan is attached at asparagine 3. A helical membrane pass occupies residues 36 to 56; that stretch reads LLYSGLAIGGTLANGMVIYLV. At 57-73 the chain is on the cytoplasmic side; the sequence is SSFRKLQTTSNAFIVNG. The helical transmembrane segment at 74-94 threads the bilayer; it reads CAADLSVCALWMPQEAVLGLL. Residues 95 to 116 lie on the Extracellular side of the membrane; the sequence is PTGSAEPPADWDGAGGSYRLLR. The chain crosses the membrane as a helical span at residues 117–136; it reads GGLLGLGLTVSLLSHCLVAL. Over 137 to 158 the chain is Cytoplasmic; that stretch reads NRYLLITRAPATYQALYQRRHT. A helical membrane pass occupies residues 159–179; that stretch reads AGMLALSWALALGLVLLLPPW. Topologically, residues 180-195 are extracellular; sequence APRPGAAPPRVHYPAL. The chain crosses the membrane as a helical span at residues 196-216; sequence LAAAALLAQTALLLHCYLGIV. Residues 217-285 are Cytoplasmic-facing; the sequence is RRVRVSVKRV…RAQRRLSGLS (69 aa). A helical transmembrane segment spans residues 286–306; it reads VLLLCCVFLLATQPLVWVSLA. Topologically, residues 307-310 are extracellular; that stretch reads SGFS. Residues 311–331 form a helical membrane-spanning segment; that stretch reads LPVPWGVQAASWLLCCALSAL. The Cytoplasmic portion of the chain corresponds to 332 to 384; that stretch reads NPLLYTWRNEEFRRSVRSVLPGVGDAAAAAVAATAVPAVSQAQLGTRAAGQHW.

It belongs to the G-protein coupled receptor 1 family. In terms of tissue distribution, expressed predominantly in the striatum.

It is found in the cell membrane. The protein resides in the cell projection. The protein localises to the cilium membrane. It localises to the cytoplasm. Its subcellular location is the nucleus. Functionally, orphan G protein-coupled receptor implicated in a large repertoire of behavioral responses that engage motor activities, spatial learning, and emotional processing. May play a role in the regulation of cognitive and motor function. Couples with the heterotrimeric G protein complex of the G(i) subfamily, consisting of GNAI1, GNB1 and GNG2, thereby acting through a G(i)-mediated pathway. Plays a role in the attenuation of D1 dopamine receptor (D1R)-mediated cAMP response in ciliated cells. In non-ciliated cells, involved in the inhibition of the beta-2 adrenergic receptor (B2AR) response. This Homo sapiens (Human) protein is G protein-coupled receptor 88 (GPR88).